Here is a 44-residue protein sequence, read N- to C-terminus: Homeobox protein DLX-1 (44 aa).

The tract at residues 19–44 (RALSAGSPPVPPGWNRIPPLGRAQEE) is disordered.

Belongs to the distal-less homeobox family. As to quaternary structure, interacts with SMAD4 (via homeobox DNA-binding domain). Interacts (via homeobox DNA-binding domain) with POU4F2; this interaction suppresses DLX1-mediated transcriptional activity in postnatal retina and enhances retinal ganglion cell (RGC) differentiation.

It localises to the nucleus. In terms of biological role, plays a role as a transcriptional activator or repressor. Inhibits several cytokine signaling pathways, such as TGFB1, activin-A/INHBA and BMP4 by interfering with the transcriptional stimulatory activity of transcription factors, such as MSX2, FAST2, SMAD2 and SMAD3 during hematopoietic cell differentiation. Plays a role in terminal differentiation of interneurons, such as amacrine and bipolar cells in the developing retina. Likely to play a regulatory role in the development of the ventral forebrain. May play a role in craniofacial patterning and morphogenesis and may be involved in the early development of diencephalic subdivisions. The polypeptide is Homeobox protein DLX-1 (Dlx1) (Rattus norvegicus (Rat)).